We begin with the raw amino-acid sequence, 261 residues long: Imidazole glycerol phosphate synthase subunit HisF (261 aa).

Active-site residues include Asp-16 and Asp-135.

It belongs to the HisA/HisF family. As to quaternary structure, heterodimer of HisH and HisF.

The protein localises to the cytoplasm. It carries out the reaction 5-[(5-phospho-1-deoxy-D-ribulos-1-ylimino)methylamino]-1-(5-phospho-beta-D-ribosyl)imidazole-4-carboxamide + L-glutamine = D-erythro-1-(imidazol-4-yl)glycerol 3-phosphate + 5-amino-1-(5-phospho-beta-D-ribosyl)imidazole-4-carboxamide + L-glutamate + H(+). The protein operates within amino-acid biosynthesis; L-histidine biosynthesis; L-histidine from 5-phospho-alpha-D-ribose 1-diphosphate: step 5/9. Functionally, IGPS catalyzes the conversion of PRFAR and glutamine to IGP, AICAR and glutamate. The HisF subunit catalyzes the cyclization activity that produces IGP and AICAR from PRFAR using the ammonia provided by the HisH subunit. This chain is Imidazole glycerol phosphate synthase subunit HisF, found in Mycobacterium marinum (strain ATCC BAA-535 / M).